A 611-amino-acid chain; its full sequence is Threonine--tRNA ligase (611 aa).

The interval 1–145 is editing domain; that stretch reads MRLLLIHSDH…TILPGEGAAA (145 aa). Positions 195–487 are catalytic; sequence VHVDLMRAKE…TAAQEVPSFP (293 aa). Positions 287, 339, and 460 each coordinate Zn(2+).

The protein belongs to the class-II aminoacyl-tRNA synthetase family. In terms of assembly, homodimer. It depends on Zn(2+) as a cofactor.

It localises to the cytoplasm. It catalyses the reaction tRNA(Thr) + L-threonine + ATP = L-threonyl-tRNA(Thr) + AMP + diphosphate + H(+). Its function is as follows. Catalyzes the attachment of threonine to tRNA(Thr) in a two-step reaction: L-threonine is first activated by ATP to form Thr-AMP and then transferred to the acceptor end of tRNA(Thr). Also edits incorrectly charged L-seryl-tRNA(Thr). The sequence is that of Threonine--tRNA ligase from Methanoculleus marisnigri (strain ATCC 35101 / DSM 1498 / JR1).